A 366-amino-acid polypeptide reads, in one-letter code: Cytochrome c peroxidase, mitochondrial (366 aa).

Histidine 123 functions as the Proton acceptor in the catalytic mechanism. The segment covering 195–206 (IEWRPGRVDDNT) has biased composition (basic and acidic residues). Positions 195 to 218 (IEWRPGRVDDNTASKVPPNGRLPD) are disordered. Histidine 247 contributes to the heme b binding site. Catalysis depends on tryptophan 263, which acts as the Tryptophan radical intermediate.

The protein belongs to the peroxidase family. Cytochrome c peroxidase subfamily. As to quaternary structure, forms a one-to-one complex with cytochrome c. Requires heme b as cofactor.

It is found in the mitochondrion matrix. The protein localises to the mitochondrion intermembrane space. It carries out the reaction 2 Fe(II)-[cytochrome c] + H2O2 + 2 H(+) = 2 Fe(III)-[cytochrome c] + 2 H2O. Destroys radicals which are normally produced within the cells and which are toxic to biological systems. This Candida albicans (strain SC5314 / ATCC MYA-2876) (Yeast) protein is Cytochrome c peroxidase, mitochondrial (CCP1).